The following is a 124-amino-acid chain: Ragulator complex protein LAMTOR2 homolog (124 aa).

The protein belongs to the GAMAD family. Part of the Ragulator complex.

Functionally, regulator of the TOR pathway, a signaling cascade that promotes cell growth in response to growth factors, energy levels, and amino acids. May activate the TOR signaling cascade in response to amino acids. The protein is Ragulator complex protein LAMTOR2 homolog of Caenorhabditis elegans.